The sequence spans 359 residues: Alanine racemase, biosynthetic (359 aa).

Lysine 34 (proton acceptor; specific for D-alanine) is an active-site residue. Lysine 34 is modified (N6-(pyridoxal phosphate)lysine). Arginine 129 is a binding site for substrate. The Proton acceptor; specific for L-alanine role is filled by tyrosine 255. Position 303 (methionine 303) interacts with substrate.

Belongs to the alanine racemase family. Monomer but homodimer in the presence of the substrate. Pyridoxal 5'-phosphate is required as a cofactor.

The enzyme catalyses L-alanine = D-alanine. It functions in the pathway amino-acid biosynthesis; D-alanine biosynthesis; D-alanine from L-alanine: step 1/1. The protein operates within cell wall biogenesis; peptidoglycan biosynthesis. Catalyzes the interconversion of L-alanine and D-alanine. The sequence is that of Alanine racemase, biosynthetic (alr) from Shigella sonnei.